Consider the following 160-residue polypeptide: Phosphopantetheine adenylyltransferase (160 aa).

Position 10 (S10) interacts with substrate. ATP is bound by residues 10-11 (SF) and H18. The substrate site is built by K42, L74, and R88. ATP contacts are provided by residues 89 to 91 (GLR), E99, and 124 to 130 (YSFLSSS).

The protein belongs to the bacterial CoaD family. As to quaternary structure, homohexamer. Mg(2+) is required as a cofactor.

It is found in the cytoplasm. It catalyses the reaction (R)-4'-phosphopantetheine + ATP + H(+) = 3'-dephospho-CoA + diphosphate. Its pathway is cofactor biosynthesis; coenzyme A biosynthesis; CoA from (R)-pantothenate: step 4/5. Functionally, reversibly transfers an adenylyl group from ATP to 4'-phosphopantetheine, yielding dephospho-CoA (dPCoA) and pyrophosphate. The sequence is that of Phosphopantetheine adenylyltransferase from Bacillus velezensis (strain DSM 23117 / BGSC 10A6 / LMG 26770 / FZB42) (Bacillus amyloliquefaciens subsp. plantarum).